The chain runs to 62 residues: Protein DsrB (62 aa).

Belongs to the DsrB family.

The polypeptide is Protein DsrB (Enterobacter sp. (strain 638)).